We begin with the raw amino-acid sequence, 286 residues long: Bifunctional protein FolD (286 aa).

NADP(+) is bound by residues 165 to 167 (GRS) and Ser190.

It belongs to the tetrahydrofolate dehydrogenase/cyclohydrolase family. Homodimer.

It carries out the reaction (6R)-5,10-methylene-5,6,7,8-tetrahydrofolate + NADP(+) = (6R)-5,10-methenyltetrahydrofolate + NADPH. It catalyses the reaction (6R)-5,10-methenyltetrahydrofolate + H2O = (6R)-10-formyltetrahydrofolate + H(+). Its pathway is one-carbon metabolism; tetrahydrofolate interconversion. In terms of biological role, catalyzes the oxidation of 5,10-methylenetetrahydrofolate to 5,10-methenyltetrahydrofolate and then the hydrolysis of 5,10-methenyltetrahydrofolate to 10-formyltetrahydrofolate. The sequence is that of Bifunctional protein FolD from Staphylococcus aureus (strain JH9).